A 743-amino-acid polypeptide reads, in one-letter code: 1,4-alpha-glucan branching enzyme GlgB (743 aa).

Aspartate 416 acts as the Nucleophile in catalysis. Glutamate 469 (proton donor) is an active-site residue.

The protein belongs to the glycosyl hydrolase 13 family. GlgB subfamily. As to quaternary structure, monomer.

It carries out the reaction Transfers a segment of a (1-&gt;4)-alpha-D-glucan chain to a primary hydroxy group in a similar glucan chain.. The protein operates within glycan biosynthesis; glycogen biosynthesis. Its function is as follows. Catalyzes the formation of the alpha-1,6-glucosidic linkages in glycogen by scission of a 1,4-alpha-linked oligosaccharide from growing alpha-1,4-glucan chains and the subsequent attachment of the oligosaccharide to the alpha-1,6 position. The sequence is that of 1,4-alpha-glucan branching enzyme GlgB from Shewanella baltica (strain OS195).